A 353-amino-acid chain; its full sequence is Methionine import ATP-binding protein MetN (353 aa).

Positions 8–249 (LDQIDVTFHQ…PKQPLTQDFI (242 aa)) constitute an ABC transporter domain. 42 to 49 (GYSGAGKS) provides a ligand contact to ATP.

It belongs to the ABC transporter superfamily. Methionine importer (TC 3.A.1.24) family. As to quaternary structure, the complex is composed of two ATP-binding proteins (MetN), two transmembrane proteins (MetI) and a solute-binding protein (MetQ).

The protein resides in the cell membrane. It catalyses the reaction L-methionine(out) + ATP + H2O = L-methionine(in) + ADP + phosphate + H(+). The catalysed reaction is D-methionine(out) + ATP + H2O = D-methionine(in) + ADP + phosphate + H(+). In terms of biological role, part of the ABC transporter complex MetNIQ involved in methionine import. Responsible for energy coupling to the transport system. The sequence is that of Methionine import ATP-binding protein MetN from Streptococcus pneumoniae (strain ATCC BAA-255 / R6).